The following is a 329-amino-acid chain: Bile salt hydrolase/transferase (329 aa).

The active-site Nucleophile; acyl-thioester intermediate is cysteine 2. 2 residues coordinate deoxycholate: cysteine 2 and arginine 18. Asparagine 82 contacts taurine.

The protein belongs to the peptidase C59 family. In terms of assembly, homotetramer. The tetramer consists of a dimer of dimers.

It catalyses the reaction glycocholate + H2O = cholate + glycine. The catalysed reaction is cholate + taurine = taurocholate + H2O. The enzyme catalyses taurodeoxycholate + H2O = deoxycholate + taurine. It carries out the reaction glycodeoxycholate + H2O = deoxycholate + glycine. It catalyses the reaction chenodeoxycholate + glycine = glycochenodeoxycholate + H2O. The catalysed reaction is taurochenodeoxycholate + H2O = chenodeoxycholate + taurine. The enzyme catalyses an L-alpha-amino acid + cholate = an N-choloyl-L-alpha-amino acid + H2O. It carries out the reaction an L-alpha-amino acid + taurocholate = an N-choloyl-L-alpha-amino acid + taurine. It catalyses the reaction glycocholate + an L-alpha-amino acid = an N-choloyl-L-alpha-amino acid + glycine. The catalysed reaction is cholate + L-histidine = L-histidocholate + H2O. The enzyme catalyses taurocholate + L-histidine = L-histidocholate + taurine. It carries out the reaction glycocholate + L-histidine = L-histidocholate + glycine. It catalyses the reaction cholate + L-arginine = L-arginocholate + H2O. The catalysed reaction is taurocholate + L-arginine = L-arginocholate + taurine. The enzyme catalyses glycocholate + L-arginine = L-arginocholate + glycine. It carries out the reaction cholate + L-phenylalanine = L-phenylalanocholate + H2O. It catalyses the reaction taurocholate + L-phenylalanine = L-phenylalanocholate + taurine. Its pathway is lipid metabolism; bile acid biosynthesis. Functionally, possesses dual functions in bile acid metabolism. Acts as a bile salt hydrolase that catalyzes the deconjugation of glycine- and taurine-linked bile salts, which occurs naturally in the intestines of humans, releasing amino acid residues and deconjugated bile salts (bile acids). Can hydrolyze the amide bond in major human conjugated bile salts, such as glycocholate (GCA), taurocholate (TCA) and taurodeoxycholate (TDCA). Shows a slight preference for taurine-conjugated bile acids as substrates. Also acts as an amine N-acyltransferase that conjugates a wide variety of amino acids to conjugated and non-conjugated bile acids, thus producing bacterial bile acid amidates (BBAAs) - also named microbially conjugated bile acids (MCBAs) - in the gastrointestinal tract. These BBAAs may facilitate communication between the microbiota and host through the activation of human ligand-activated transcription factors. This is Bile salt hydrolase/transferase (cbh) from Clostridium perfringens (strain 13 / Type A).